Reading from the N-terminus, the 442-residue chain is Casein kinase 1-like protein 10 (442 aa).

Residues 9 to 278 (FKLGRKIGSG…LKRLFRDLFI (270 aa)) enclose the Protein kinase domain. ATP is bound by residues 15-23 (IGSGSFGEL) and K38. D128 (proton acceptor) is an active-site residue. Disordered stretches follow at residues 299 to 323 (GSIS…ERNE) and 381 to 421 (AVMS…LSAR). The span at 305–317 (RPNPKPALDPPGP) shows a compositional bias: pro residues. Over residues 384–394 (SSSQPGSSGEL) the composition is skewed to low complexity. Over residues 400 to 417 (SKLFSSSAQKIQPVQETK) the composition is skewed to polar residues.

It belongs to the protein kinase superfamily. CK1 Ser/Thr protein kinase family. Casein kinase I subfamily. Monomer. Autophosphorylated.

The protein resides in the cytoplasm. Its subcellular location is the cell junction. It localises to the plasmodesma. It carries out the reaction L-seryl-[protein] + ATP = O-phospho-L-seryl-[protein] + ADP + H(+). The catalysed reaction is L-threonyl-[protein] + ATP = O-phospho-L-threonyl-[protein] + ADP + H(+). Its function is as follows. Casein kinases are operationally defined by their preferential utilization of acidic proteins such as caseins as substrates. It can phosphorylate a large number of proteins. The polypeptide is Casein kinase 1-like protein 10 (Arabidopsis thaliana (Mouse-ear cress)).